A 451-amino-acid polypeptide reads, in one-letter code: Tubulin alpha-1A chain (451 aa).

Residues G10, Q11, A12, and Q15 each contribute to the GTP site. Residue K40 is modified to N6-acetyllysine. The GTP site is built by E71, A99, S140, G143, G144, T145, G146, T179, E183, N206, Y224, N228, and L252. E71 is a Mg(2+) binding site. E254 is an active-site residue. Y282 is modified (3'-nitrotyrosine). Phosphoserine is present on S439. E443 and E445 each carry 5-glutamyl polyglutamate. At Y451 the chain carries 3'-nitrotyrosine.

It belongs to the tubulin family. In terms of assembly, heterodimer of alpha- and beta-tubulin. A typical microtubule is a hollow water-filled tube with an outer diameter of 25 nm and an inner diameter of 15 nM. Alpha-beta heterodimers associate head-to-tail to form protofilaments running lengthwise along the microtubule wall with the beta-tubulin subunit facing the microtubule plus end conferring a structural polarity. Microtubules usually have 13 protofilaments but different protofilament numbers can be found in some organisms and specialized cells. Interacts with gamma-tubulin; the interaction allows microtubules to nucleate from the gamma-tubulin ring complex (gTuRC). Nascent microtubule interacts (via alpha-tubulin MREC motif) with TTC5/STRAP; this interaction may result in tubulin mRNA-targeted degradation. Component of sperm flagellar doublet microtubules. Requires Mg(2+) as cofactor. Some glutamate residues at the C-terminus are polyglycylated, resulting in polyglycine chains on the gamma-carboxyl group. Glycylation is mainly limited to tubulin incorporated into axonemes (cilia and flagella) whereas glutamylation is prevalent in neuronal cells, centrioles, axonemes, and the mitotic spindle. Both modifications can coexist on the same protein on adjacent residues, and lowering polyglycylation levels increases polyglutamylation, and reciprocally. Cilia and flagella glycylation is required for their stability and maintenance. Flagella glycylation controls sperm motility. Post-translationally, some glutamate residues at the C-terminus are polyglutamylated, resulting in polyglutamate chains on the gamma-carboxyl group. Polyglutamylation plays a key role in microtubule severing by spastin (SPAST). SPAST preferentially recognizes and acts on microtubules decorated with short polyglutamate tails: severing activity by SPAST increases as the number of glutamates per tubulin rises from one to eight, but decreases beyond this glutamylation threshold. Glutamylation is also involved in cilia motility. In terms of processing, acetylation of alpha chains at Lys-40 is located inside the microtubule lumen. This modification has been correlated with increased microtubule stability, intracellular transport and ciliary assembly. Methylation of alpha chains at Lys-40 is found in mitotic microtubules and is required for normal mitosis and cytokinesis contributing to genomic stability. Post-translationally, nitration of Tyr-451 is irreversible and interferes with normal dynein intracellular distribution. In terms of processing, undergoes a tyrosination/detyrosination cycle, the cyclic removal and re-addition of a C-terminal tyrosine residue by the enzymes tubulin tyrosine carboxypeptidase (MATCAP1, VASH1 or VASH2) and tubulin tyrosine ligase (TTL), respectively. Tyrosination promotes microtubule interaction with CAP-Gly domain-containing proteins such as CLIP1, CLIP2 and DCTN1. Tyrosination regulates the initiation of dynein-dynactin motility via interaction with DCTN1, which brings the dynein-dynactin complex into contact with microtubules. In neurons, tyrosinated tubulins mediate the initiation of retrograde vesicle transport. Post-translationally, detyrosination is involved in metaphase plate congression by guiding chromosomes during mitosis: detyrosination promotes interaction with CENPE, promoting pole-proximal transport of chromosomes toward the equator. Detyrosination increases microtubules-dependent mechanotransduction in dystrophic cardiac and skeletal muscle. In cardiomyocytes, detyrosinated microtubules are required to resist to contractile compression during contraction: detyrosination promotes association with desmin (DES) at force-generating sarcomeres, leading to buckled microtubules and mechanical resistance to contraction.

The protein localises to the cytoplasm. It localises to the cytoskeleton. The protein resides in the flagellum axoneme. It catalyses the reaction GTP + H2O = GDP + phosphate + H(+). In terms of biological role, tubulin is the major constituent of microtubules, protein filaments consisting of alpha- and beta-tubulin heterodimers. Microtubules grow by the addition of GTP-tubulin dimers to the microtubule end, where a stabilizing cap forms. Below the cap, tubulin dimers are in GDP-bound state, owing to GTPase activity of alpha-tubulin. The protein is Tubulin alpha-1A chain (TUBA1A) of Sus scrofa (Pig).